The chain runs to 83 residues: Beta-defensin 19 (83 aa).

The first 19 residues, 1 to 19 (MRLALLLLAILVATELVVS), serve as a signal peptide directing secretion. Disulfide bonds link Cys-27–Cys-54, Cys-34–Cys-48, and Cys-38–Cys-55.

It belongs to the beta-defensin family. As to expression, specifically expressed in male gonads (Sertoli cells).

It is found in the secreted. Has antibacterial activity. This chain is Beta-defensin 19 (Defb19), found in Mus musculus (Mouse).